Here is a 194-residue protein sequence, read N- to C-terminus: Imidazoleglycerol-phosphate dehydratase (194 aa).

This sequence belongs to the imidazoleglycerol-phosphate dehydratase family.

The protein resides in the cytoplasm. It carries out the reaction D-erythro-1-(imidazol-4-yl)glycerol 3-phosphate = 3-(imidazol-4-yl)-2-oxopropyl phosphate + H2O. Its pathway is amino-acid biosynthesis; L-histidine biosynthesis; L-histidine from 5-phospho-alpha-D-ribose 1-diphosphate: step 6/9. This Thermus thermophilus (strain ATCC 27634 / DSM 579 / HB8) protein is Imidazoleglycerol-phosphate dehydratase.